The chain runs to 468 residues: Glucose transport protein (468 aa).

Residues methionine 1–valine 17 are Cytoplasmic-facing. Residues leucine 18–isoleucine 38 form a helical membrane-spanning segment. The Extracellular segment spans residues asparagine 39–leucine 58. The helical transmembrane segment at serine 59–alanine 78 threads the bilayer. Over aspartate 79–isoleucine 84 the chain is Cytoplasmic. Residues lysine 85–phenylalanine 105 form a helical membrane-spanning segment. Residues threonine 106 to arginine 114 are Extracellular-facing. The chain crosses the membrane as a helical span at residues valine 115–valine 135. Residues serine 136–glutamine 149 are Cytoplasmic-facing. The chain crosses the membrane as a helical span at residues leucine 150–alanine 170. Residues glycine 171–arginine 186 lie on the Extracellular side of the membrane. Residues tryptophan 187–proline 207 form a helical membrane-spanning segment. The Cytoplasmic portion of the chain corresponds to glutamate 208–proline 265. Residues isoleucine 266–phenylalanine 286 form a helical membrane-spanning segment. Residues tyrosine 287 to threonine 307 are Extracellular-facing. Residues valine 308–phenylalanine 328 traverse the membrane as a helical segment. The Cytoplasmic segment spans residues glycine 329 to lysine 331. Residues proline 332–phenylalanine 352 form a helical membrane-spanning segment. Residues glycine 353–glycine 366 lie on the Extracellular side of the membrane. Residues alanine 367–tryptophan 387 traverse the membrane as a helical segment. Topologically, residues glycine 388 to alanine 412 are cytoplasmic. Residues glycine 413–valine 433 form a helical membrane-spanning segment. Over glycine 434 to glycine 436 the chain is Extracellular. The helical transmembrane segment at proline 437 to valine 457 threads the bilayer. Residues lysine 458 to methionine 468 lie on the Cytoplasmic side of the membrane.

This sequence belongs to the major facilitator superfamily. Sugar transporter (TC 2.A.1.1) family.

It is found in the cell membrane. This chain is Glucose transport protein (gtr), found in Synechocystis sp. (strain ATCC 27184 / PCC 6803 / Kazusa).